A 510-amino-acid chain; its full sequence is Hydroperoxide bicyclase CYP5164A3, mitochondrial (510 aa).

The transit peptide at 1 to 31 directs the protein to the mitochondrion; the sequence is MQRVGAASPTCSSLQAPAAAPPILTISPHHR. A heme-binding site is contributed by Cys-452.

The protein belongs to the cytochrome P450 family. Requires heme as cofactor.

It is found in the mitochondrion. It carries out the reaction (13S)-hydroperoxy-(9Z,11E,15Z)-octadecatrienoate = plasmodiophorol A. It catalyses the reaction (13S)-hydroperoxy-(9Z,11E,15Z)-octadecatrienoate = plasmodiophorol B. The enzyme catalyses (13S)-hydroperoxy-(9Z,11E,15Z)-octadecatrienoate = ectocarpin A + H2O. The catalysed reaction is (15S)-hydroperoxy-(5Z,8Z,11Z,13E,17Z)-eicosapentaenoate = ectocarpin B + H2O. It carries out the reaction (15S)-hydroperoxy-(5Z,8Z,11Z,13E,17Z)-eicosapentaenoate = ectocarpin C. It catalyses the reaction (15S)-hydroperoxy-(5Z,8Z,11Z,13E,17Z)-eicosapentaenoate + H2O = ectocarpin D. The enzyme catalyses (15S)-hydroperoxy-(5Z,8Z,11Z,13E,17Z)-eicosapentaenoate = 14-oxo-15-hydroxy-(5Z,8Z,11Z,17Z)-eicosatetraenoate. Its pathway is lipid metabolism; oxylipin biosynthesis. Cytochrome P450 hydroperoxide bicyclase involved in the metabolism of oxylipins 'ectocarpins' natural products, such as hybridalactone, ecklonilactones and derivatives. Isomerizes the hydroperoxides into epoxyalcohols via epoxyallylic radical. Can use alpha-linolenic acid 13(S)-hydroperoxide (13-HPOTE) and eicosapentaenoic acid 15(S)-hydroperoxide (15-HPEPE) as preferred substrate to produce corresponding heterobicyclic oxylipins, such as plasmodiophorol A (6-oxabicyclo[3.1.0]hexane), plasmodiophorol B (2-oxabicyclo[2.2.1]heptane) and plasmodiophorol C (4-hydroxymethyl-1,2-dihydroxycyclopentane) as well as ectocarpin A (3-propenyl-6-oxabicyclo[3.1.0]hexane) formed at about 15:3:3:1 ratio for 13-HPOTE, and analogous to plasmodiophorols A and B including ectocarpin B (3-[(1'E)-propenyl]-6-oxabicyclo[3.1.0]hexane), ectocarpin C, 14-oxo-15-hydroxy-5,8,11,17-eicosate-traenoic acid and ectocarpin D for 15-HPEPE. Barely able to use linoleic acid 13-hydroperoxide (13-HPODE), linoleic acid 9-hydroperoxide (9-HPODE), eicosapentaenoic acid 15-hydroperoxide (15-HPEPE), and alpha-linolenic acid 9-hydroperoxide (9-HPOTE) as substrates. The polypeptide is Hydroperoxide bicyclase CYP5164A3, mitochondrial (Ectocarpus siliculosus (Brown alga)).